Here is a 225-residue protein sequence, read N- to C-terminus: UPF0758 protein Shew185_0376 (225 aa).

The region spanning 102-224 (VLTNPDLTRD…IVSFAERGWI (123 aa)) is the MPN domain. Residues His173, His175, and Asp186 each coordinate Zn(2+). The short motif at 173-186 (HNHPSGNAEPSQAD) is the JAMM motif element.

Belongs to the UPF0758 family.

This Shewanella baltica (strain OS185) protein is UPF0758 protein Shew185_0376.